The primary structure comprises 207 residues: GTP cyclohydrolase 1 (207 aa).

Positions 88, 91, and 162 each coordinate Zn(2+).

The protein belongs to the GTP cyclohydrolase I family. As to quaternary structure, toroid-shaped homodecamer, composed of two pentamers of five dimers.

The catalysed reaction is GTP + H2O = 7,8-dihydroneopterin 3'-triphosphate + formate + H(+). It functions in the pathway cofactor biosynthesis; 7,8-dihydroneopterin triphosphate biosynthesis; 7,8-dihydroneopterin triphosphate from GTP: step 1/1. The sequence is that of GTP cyclohydrolase 1 from Sulfurisphaera tokodaii (strain DSM 16993 / JCM 10545 / NBRC 100140 / 7) (Sulfolobus tokodaii).